The following is a 190-amino-acid chain: GATA transcription factor 17 (190 aa).

Residues 1–14 show a composition bias toward basic and acidic residues; that stretch reads MSEGSEDTKTKLDS. 2 disordered regions span residues 1 to 42 and 77 to 101; these read MSEG…DTKR and RQAA…NDLN. Residues 38 to 92 form a GATA-type zinc finger; that stretch reads GDTKRTCVDCGTIRTPLWRGGPAGPKSLCNACGIKSRKKRQAALGMRSEEKKKNR.

This sequence belongs to the type IV zinc-finger family. Class B subfamily.

Its subcellular location is the nucleus. Functionally, transcriptional regulator that specifically binds 5'-GATA-3' or 5'-GAT-3' motifs within gene promoters. The polypeptide is GATA transcription factor 17 (GATA17) (Arabidopsis thaliana (Mouse-ear cress)).